Reading from the N-terminus, the 382-residue chain is ATP phosphoribosyltransferase regulatory subunit (382 aa).

The protein belongs to the class-II aminoacyl-tRNA synthetase family. HisZ subfamily. Heteromultimer composed of HisG and HisZ subunits.

It is found in the cytoplasm. It participates in amino-acid biosynthesis; L-histidine biosynthesis; L-histidine from 5-phospho-alpha-D-ribose 1-diphosphate: step 1/9. Its function is as follows. Required for the first step of histidine biosynthesis. May allow the feedback regulation of ATP phosphoribosyltransferase activity by histidine. This is ATP phosphoribosyltransferase regulatory subunit from Burkholderia lata (strain ATCC 17760 / DSM 23089 / LMG 22485 / NCIMB 9086 / R18194 / 383).